Consider the following 267-residue polypeptide: Phosphate import ATP-binding protein PstB (267 aa).

The ABC transporter domain maps to 21–262 (VAARNLDFYY…PSKQQTEDYI (242 aa)). 53–60 (GPSGCGKS) provides a ligand contact to ATP.

This sequence belongs to the ABC transporter superfamily. Phosphate importer (TC 3.A.1.7) family. The complex is composed of two ATP-binding proteins (PstB), two transmembrane proteins (PstC and PstA) and a solute-binding protein (PstS).

The protein resides in the cell inner membrane. The catalysed reaction is phosphate(out) + ATP + H2O = ADP + 2 phosphate(in) + H(+). Its function is as follows. Part of the ABC transporter complex PstSACB involved in phosphate import. Responsible for energy coupling to the transport system. This is Phosphate import ATP-binding protein PstB from Xanthomonas euvesicatoria pv. vesicatoria (strain 85-10) (Xanthomonas campestris pv. vesicatoria).